We begin with the raw amino-acid sequence, 338 residues long: ATP synthase subunit a (338 aa).

The helical transmembrane segment at 15–35 (IAVLVMPLLLGFGAPIYAAAE) threads the bilayer. Residues 45 to 66 (AAAVHTDEAHGEAGEHAEGGHG) are disordered. A compositionally biased stretch (basic and acidic residues) spans 49 to 65 (HTDEAHGEAGEHAEGGH). A run of 7 helical transmembrane segments spans residues 109-129 (HVVF…YVGN), 174-194 (LLTV…PYGA), 199-219 (NINV…VSAI), 238-258 (ALWI…PFAL), 262-282 (LFAN…ISFI), 287-307 (IVAI…EIFV), and 308-328 (SFLQ…LGSA).

It belongs to the ATPase A chain family. As to quaternary structure, F-type ATPases have 2 components, CF(1) - the catalytic core - and CF(0) - the membrane proton channel. CF(1) has five subunits: alpha(3), beta(3), gamma(1), delta(1), epsilon(1). CF(0) has four main subunits: a, b, b' and c.

The protein localises to the cell inner membrane. Its function is as follows. Key component of the proton channel; it plays a direct role in the translocation of protons across the membrane. The chain is ATP synthase subunit a from Chlorobium phaeobacteroides (strain BS1).